Reading from the N-terminus, the 240-residue chain is MNTENLLKNNNVDHEEIAKFEAVASRWWDLEGEFKPLHRINPLRLGYIAERAGGLFGKKVLDVGCGGGILAESMAREGATVTGLDMGFEPLQVAKLHALESGIQVDYVQETVEEHAAKHAGQYDVVTCMEMLEHVPDPQSVVRACAQLVKPGGDVFFSTLNRNGKSWLMAVVGAEYILRMVPKGTHDVKKFIKPAELLGWVDQTSLKERHMTGLHYNPITNSFKLGPGVDVNYMLHTQNK.

S-adenosyl-L-methionine is bound by residues R44, G64, D85, and M129.

This sequence belongs to the methyltransferase superfamily. UbiG/COQ3 family.

It carries out the reaction a 3-demethylubiquinol + S-adenosyl-L-methionine = a ubiquinol + S-adenosyl-L-homocysteine + H(+). The enzyme catalyses a 3-(all-trans-polyprenyl)benzene-1,2-diol + S-adenosyl-L-methionine = a 2-methoxy-6-(all-trans-polyprenyl)phenol + S-adenosyl-L-homocysteine + H(+). Its pathway is cofactor biosynthesis; ubiquinone biosynthesis. O-methyltransferase that catalyzes the 2 O-methylation steps in the ubiquinone biosynthetic pathway. The chain is Ubiquinone biosynthesis O-methyltransferase from Escherichia coli (strain SMS-3-5 / SECEC).